A 407-amino-acid polypeptide reads, in one-letter code: Elongation factor Tu (407 aa).

In terms of domain architecture, tr-type G spans 10–217 (KPHVNVGTIG…TLDEYIPEPE (208 aa)). Residues 19–26 (GHVDHGKT) form a G1 region. 19–26 (GHVDHGKT) contributes to the GTP binding site. T26 is a Mg(2+) binding site. The tract at residues 60–64 (GITIA) is G2. The tract at residues 81-84 (DCPG) is G3. Residues 81 to 85 (DCPGH) and 136 to 139 (NKAD) contribute to the GTP site. The tract at residues 136–139 (NKAD) is G4. The interval 184-186 (SAL) is G5.

The protein belongs to the TRAFAC class translation factor GTPase superfamily. Classic translation factor GTPase family. EF-Tu/EF-1A subfamily. Monomer.

It is found in the cytoplasm. The catalysed reaction is GTP + H2O = GDP + phosphate + H(+). Its function is as follows. GTP hydrolase that promotes the GTP-dependent binding of aminoacyl-tRNA to the A-site of ribosomes during protein biosynthesis. This Teredinibacter turnerae (strain ATCC 39867 / T7901) protein is Elongation factor Tu.